A 336-amino-acid chain; its full sequence is IgLON family member 5 (336 aa).

An N-terminal signal peptide occupies residues 1 to 30 (MPPPAPGARLRLLAAAALAGLAVISRGLLS). Ig-like C2-type domains lie at 33-122 (LEFN…QPYT), 132-217 (PARI…VNYP), and 218-307 (PTIT…MRLL). N-linked (GlcNAc...) asparagine glycans are attached at residues Asn-41, Asn-49, Asn-67, and Asn-137. A disulfide bridge connects residues Cys-54 and Cys-112. 2 disulfide bridges follow: Cys-154-Cys-195 and Cys-238-Cys-291. Asn-288 is a glycosylation site (N-linked (GlcNAc...) asparagine).

This sequence belongs to the immunoglobulin superfamily. IgLON family.

It localises to the secreted. This chain is IgLON family member 5 (IGLON5), found in Homo sapiens (Human).